The chain runs to 1477 residues: Alpha-1-inhibitor 3 (1477 aa).

Residues 1-24 (MKKDREAQLCLFSALLAFLPFASL) form the signal peptide. Cysteine 48 and cysteine 86 are joined by a disulfide. Asparagine 55 and asparagine 247 each carry an N-linked (GlcNAc...) asparagine glycan. Disulfide bonds link cysteine 251/cysteine 295 and cysteine 269/cysteine 283. N-linked (GlcNAc...) asparagine glycans are attached at residues asparagine 301, asparagine 321, asparagine 393, and asparagine 508. 3 cysteine pairs are disulfide-bonded: cysteine 468–cysteine 563, cysteine 595–cysteine 774, and cysteine 643–cysteine 678. A bait region (approximate) region spans residues 601–750 (DQSVLLQKPE…TWIWDLVTVN (150 aa)). 3 N-linked (GlcNAc...) asparagine glycosylation sites follow: asparagine 750, asparagine 777, and asparagine 872. Cystine bridges form between cysteine 850/cysteine 886, cysteine 924/cysteine 1324, cysteine 1082/cysteine 1130, and cysteine 1355/cysteine 1470. The isoglutamyl cysteine thioester (Cys-Gln) cross-link spans 975–978 (CGEQ). N-linked (GlcNAc...) asparagine glycosylation occurs at asparagine 994. N-linked (GlcNAc...) asparagine glycans are attached at residues asparagine 1143, asparagine 1314, and asparagine 1427.

The protein belongs to the protease inhibitor I39 (alpha-2-macroglobulin) family. Monomer.

The protein localises to the secreted. Its function is as follows. Protease inhibitor with a wide spectrum of protein targets, which attaches through its thioester function. The polypeptide is Alpha-1-inhibitor 3 (A1i3) (Rattus norvegicus (Rat)).